The sequence spans 307 residues: Putative F-box protein PP2-B6 (307 aa).

Positions His-42–Phe-88 constitute an F-box domain.

This is Putative F-box protein PP2-B6 (PP2B6) from Arabidopsis thaliana (Mouse-ear cress).